The chain runs to 387 residues: Mannitol-1-phosphate 5-dehydrogenase (387 aa).

Position 3–14 (3–14 (ALHFGAGNIGRG)) interacts with NAD(+).

The protein belongs to the mannitol dehydrogenase family.

It carries out the reaction D-mannitol 1-phosphate + NAD(+) = beta-D-fructose 6-phosphate + NADH + H(+). In Yersinia pseudotuberculosis serotype O:1b (strain IP 31758), this protein is Mannitol-1-phosphate 5-dehydrogenase.